Reading from the N-terminus, the 142-residue chain is ATP synthase epsilon chain (142 aa).

It belongs to the ATPase epsilon chain family. In terms of assembly, F-type ATPases have 2 components, CF(1) - the catalytic core - and CF(0) - the membrane proton channel. CF(1) has five subunits: alpha(3), beta(3), gamma(1), delta(1), epsilon(1). CF(0) has three main subunits: a, b and c.

The protein localises to the cell inner membrane. Its function is as follows. Produces ATP from ADP in the presence of a proton gradient across the membrane. This chain is ATP synthase epsilon chain, found in Shewanella baltica (strain OS155 / ATCC BAA-1091).